The sequence spans 347 residues: Phosphate acyltransferase (347 aa).

Belongs to the PlsX family. As to quaternary structure, homodimer. Probably interacts with PlsY.

It localises to the cytoplasm. It carries out the reaction a fatty acyl-[ACP] + phosphate = an acyl phosphate + holo-[ACP]. Its pathway is lipid metabolism; phospholipid metabolism. Catalyzes the reversible formation of acyl-phosphate (acyl-PO(4)) from acyl-[acyl-carrier-protein] (acyl-ACP). This enzyme utilizes acyl-ACP as fatty acyl donor, but not acyl-CoA. The chain is Phosphate acyltransferase from Lawsonia intracellularis (strain PHE/MN1-00).